The sequence spans 132 residues: NADH-quinone oxidoreductase subunit I 1 (132 aa).

2 4Fe-4S ferredoxin-type domains span residues 42–71 and 81–110; these read LKVSHDKAKCVACYLCPTVCPAKCITVEAG and ERYEIDMLRCIFCGYCVEACPVDALKMTGQ. Cys51, Cys54, Cys57, Cys61, Cys90, Cys93, Cys96, and Cys100 together coordinate [4Fe-4S] cluster.

This sequence belongs to the complex I 23 kDa subunit family. NDH-1 is composed of 14 different subunits. Subunits NuoA, H, J, K, L, M, N constitute the membrane sector of the complex. It depends on [4Fe-4S] cluster as a cofactor.

It is found in the cell inner membrane. The enzyme catalyses a quinone + NADH + 5 H(+)(in) = a quinol + NAD(+) + 4 H(+)(out). NDH-1 shuttles electrons from NADH, via FMN and iron-sulfur (Fe-S) centers, to quinones in the respiratory chain. The immediate electron acceptor for the enzyme in this species is believed to be ubiquinone. Couples the redox reaction to proton translocation (for every two electrons transferred, four hydrogen ions are translocated across the cytoplasmic membrane), and thus conserves the redox energy in a proton gradient. The protein is NADH-quinone oxidoreductase subunit I 1 of Geobacter sulfurreducens (strain ATCC 51573 / DSM 12127 / PCA).